The following is a 480-amino-acid chain: Aspartyl/glutamyl-tRNA(Asn/Gln) amidotransferase subunit B (480 aa).

The protein belongs to the GatB/GatE family. GatB subfamily. As to quaternary structure, heterotrimer of A, B and C subunits.

It carries out the reaction L-glutamyl-tRNA(Gln) + L-glutamine + ATP + H2O = L-glutaminyl-tRNA(Gln) + L-glutamate + ADP + phosphate + H(+). It catalyses the reaction L-aspartyl-tRNA(Asn) + L-glutamine + ATP + H2O = L-asparaginyl-tRNA(Asn) + L-glutamate + ADP + phosphate + 2 H(+). In terms of biological role, allows the formation of correctly charged Asn-tRNA(Asn) or Gln-tRNA(Gln) through the transamidation of misacylated Asp-tRNA(Asn) or Glu-tRNA(Gln) in organisms which lack either or both of asparaginyl-tRNA or glutaminyl-tRNA synthetases. The reaction takes place in the presence of glutamine and ATP through an activated phospho-Asp-tRNA(Asn) or phospho-Glu-tRNA(Gln). This Streptococcus pneumoniae (strain ATCC 700669 / Spain 23F-1) protein is Aspartyl/glutamyl-tRNA(Asn/Gln) amidotransferase subunit B.